A 364-amino-acid polypeptide reads, in one-letter code: Uroporphyrinogen decarboxylase (364 aa).

Substrate-binding positions include R49–R53, D98, Y173, S228, and H341.

It belongs to the uroporphyrinogen decarboxylase family. In terms of assembly, homodimer.

Its subcellular location is the cytoplasm. The enzyme catalyses uroporphyrinogen III + 4 H(+) = coproporphyrinogen III + 4 CO2. It functions in the pathway porphyrin-containing compound metabolism; protoporphyrin-IX biosynthesis; coproporphyrinogen-III from 5-aminolevulinate: step 4/4. Its function is as follows. Catalyzes the decarboxylation of four acetate groups of uroporphyrinogen-III to yield coproporphyrinogen-III. The polypeptide is Uroporphyrinogen decarboxylase (Protochlamydia amoebophila (strain UWE25)).